The following is a 768-amino-acid chain: Cullin-3 (768 aa).

N-acetylserine is present on serine 2. Residues 2–41 are interaction with KLHL18; it reads SNLSKGTGSRKDTKMRIRAFPMTMDEKYVNSIWDLLKNAI. A Phosphoserine modification is found at serine 585. A disordered region spans residues 677–698; sequence VAAKQGESDPERKETRQKVDDD. Residues 682 to 698 show a composition bias toward basic and acidic residues; sequence GESDPERKETRQKVDDD. The Cullin neddylation domain occupies 698 to 760; sequence DRKHEIEAAI…REYLARTPED (63 aa). Residue lysine 712 forms a Glycyl lysine isopeptide (Lys-Gly) (interchain with G-Cter in NEDD8) linkage.

It belongs to the cullin family. As to quaternary structure, forms neddylation-dependent homodimers. Component of multiple BCR (BTB-CUL3-RBX1) E3 ubiquitin-protein ligase complexes formed of CUL3, RBX1 and a variable BTB domain-containing protein acting as both, adapter to cullin and substrate recognition subunit. The BCR complex may be active as a heterodimeric complex, in which NEDD8, covalently attached to one CUL3 molecule, binds to the C-terminus of a second CUL3 molecule. Interacts with RBX1, RNF7, CYCE and TIP120A/CAND1. Part of the BCR(SPOP) containing SPOP, and of BCR containing homodimeric SPOPL or the heterodimer formed by SPOP and SPOPL. Part of the probable BCR(KLHL9-KLHL13) complex with BTB domain proteins KLHL9 and KLHL13. Part of the BCR(KLHL41) complex containing KLHL41. Component of the BCR(KLHL12) E3 ubiquitin ligase complex, at least composed of CUL3 and KLHL12 and RBX1. Component of the BCR(KLHL3) E3 ubiquitin ligase complex, at least composed of CUL3 and KLHL3 and RBX1. Part of the BCR(ENC1) complex containing ENC1. Part of a complex consisting of BMI1/PCGF4, CUL3 and SPOP. Part of a complex consisting of BRMS1, CUL3 and SPOP. Component of the BCR(KLHL21) E3 ubiquitin ligase complex, at least composed of CUL3, KLHL21 and RBX1. Component of the BCR(KLHL22) E3 ubiquitin ligase complex, at least composed of CUL3, KLHL22 and RBX1. Component of the BCR(KLHL25) E3 ubiquitin ligase complex, at least composed of CUL3, KLHL25 and RBX1. Part of a complex consisting of MACROH2A1, CUL3 and SPOP. Component of the BCR(KLHL42) E3 ubiquitin ligase complex, at least composed of CUL3 and KLHL42. Interacts with KLHL42 (via the BTB domain). Interacts with KATNA1; the interaction is enhanced by KLHL42. Component of the BCR(KBTBD8) E3 ubiquitin ligase complex, at least composed of CUL3, KBTBD8 and RBX1. Interacts with KCTD5, KLHL9, KLHL11, KLHL13, GAN, ZBTB16, KLHL3, KLHL15, KLHL20, KLHL36, GMCL2, BTBD1. Part of a complex that contains CUL3, RBX1 and GAN. Interacts (via BTB domain) with KLHL17; the interaction regulates surface GRIK2 expression. Interacts with KCTD7. Part of the BCR(GAN) complex containing GAN. Part of the BCR(KEAP1) complex containing KEAP1. Interacts with KLHL10. Interacts with KAT5 and ATF2. Interacts with KCTD17 in the BCR(KCTD17) E3 ubiquitin ligase complex, at least composed of CUL3, KCTD17 and RBX1. Interacts (when neddylated) with ARIH1; leading to activate the E3 ligase activity of ARIH1. Interacts with COPS9 isoform 2. Interacts with PPP2R5B; this interaction is indirect and mediated through KLHL15-binding and leads to PPP2R5B proteasomal degradation. Interacts with RBBP8/CtIP; this interaction is indirect and mediated through KLHL15-binding and leads to RBBP8 proteasomal degradation. Interacts with KLHL24 in the BCR(KLHL24) E3 ubiquitin ligase complex, composed of CUL3, RBX1 and KLHL24. Interacts with RHOBTB2. Interacts with AURKA and KLHL18 (via BTB domain). Interacts (unneddylated form) with DCUN1D1, DCUN1D2, DCUN1D3, DCUN1D4 and DCUN1D5; these interactions promote the cullin neddylation. Component of a BCR3 (BTB-CUL3-RBX1) E3 ubiquitin ligase complex, also named Cul3-RING ubiquitin ligase complex CUL3(KBTBD6/7), composed of CUL3, RBX1, KBTBD6 and KBTBD7. Component of the BCR(KBTBD2) E3 ubiquitin ligase complex, at least composed of CUL3, KBTBD2 and RBX1. Interacts with KBTBD2 (via the BTB domain). Component of the BCR(KBTBD4) E3 ubiquitin ligase complex, at least composed of CUL3, KBTBD4 and RBX1. Component of the BCR(ARMC5) E3 ubiquitin ligase complex, composed of CUL3, ARMC5 and RBX1. In terms of processing, neddylated. Attachment of NEDD8 is required for the E3 ubiquitin-protein ligase activity of the BCR complex. Deneddylated via its interaction with the COP9 signalosome (CSN) complex. In terms of tissue distribution, brain, spermatozoa, and testis (at protein level). Widely expressed.

The protein localises to the nucleus. It is found in the golgi apparatus. Its subcellular location is the cell projection. It localises to the cilium. The protein resides in the flagellum. The protein localises to the cytoplasm. It is found in the cytoskeleton. Its subcellular location is the spindle. It localises to the microtubule organizing center. The protein resides in the centrosome. The protein localises to the spindle pole. The protein operates within protein modification; protein ubiquitination. Its function is as follows. Core component of multiple cullin-RING-based BCR (BTB-CUL3-RBX1) E3 ubiquitin-protein ligase complexes which mediate the ubiquitination and subsequent proteasomal degradation of target proteins. BCR complexes and ARIH1 collaborate in tandem to mediate ubiquitination of target proteins. As a scaffold protein may contribute to catalysis through positioning of the substrate and the ubiquitin-conjugating enzyme. The E3 ubiquitin-protein ligase activity of the complex is dependent on the neddylation of the cullin subunit and is inhibited by the association of the deneddylated cullin subunit with TIP120A/CAND1. The functional specificity of the BCR complex depends on the BTB domain-containing protein as the substrate recognition component. BCR(KLHL42) is involved in ubiquitination of KATNA1. BCR(SPOP) is involved in ubiquitination of BMI1/PCGF4, BRMS1, MACROH2A1 and DAXX, GLI2 and GLI3. Can also form a cullin-RING-based BCR (BTB-CUL3-RBX1) E3 ubiquitin-protein ligase complex containing homodimeric SPOPL or the heterodimer formed by SPOP and SPOPL; these complexes have lower ubiquitin ligase activity. BCR(KLHL9-KLHL13) controls the dynamic behavior of AURKB on mitotic chromosomes and thereby coordinates faithful mitotic progression and completion of cytokinesis. BCR(KLHL12) is involved in ER-Golgi transport by regulating the size of COPII coats, thereby playing a key role in collagen export, which is required for embryonic stem (ES) cells division: BCR(KLHL12) acts by mediating monoubiquitination of SEC31 (SEC31A or SEC31B). BCR(KLHL3) acts as a regulator of ion transport in the distal nephron; by mediating ubiquitination of WNK4. The BCR(KLHL20) E3 ubiquitin ligase complex is involved in interferon response and anterograde Golgi to endosome transport: it mediates both ubiquitination leading to degradation and 'Lys-33'-linked ubiquitination. The BCR(KLHL21) E3 ubiquitin ligase complex regulates localization of the chromosomal passenger complex (CPC) from chromosomes to the spindle midzone in anaphase and mediates the ubiquitination of AURKB. The BCR(KLHL22) ubiquitin ligase complex mediates monoubiquitination of PLK1, leading to PLK1 dissociation from phosphoreceptor proteins and subsequent removal from kinetochores, allowing silencing of the spindle assembly checkpoint (SAC) and chromosome segregation. The BCR(KLHL22) ubiquitin ligase complex is also responsible for the amino acid-stimulated 'Lys-48' polyubiquitination and proteasomal degradation of DEPDC5. Through the degradation of DEPDC5, releases the GATOR1 complex-mediated inhibition of the TORC1 pathway. The BCR(KLHL25) ubiquitin ligase complex is involved in translational homeostasis by mediating ubiquitination and subsequent degradation of hypophosphorylated EIF4EBP1 (4E-BP1). The BCR(KLHL25) ubiquitin ligase complex is also involved in lipid synthesis by mediating ubiquitination and degradation of ACLY. The BCR(KBTBD8) complex acts by mediating monoubiquitination of NOLC1 and TCOF1, leading to remodel the translational program of differentiating cells in favor of neural crest specification. Involved in ubiquitination of cyclin E and of cyclin D1 (in vitro) thus involved in regulation of G1/S transition. Involved in the ubiquitination of KEAP1, ENC1 and KLHL41. In concert with ATF2 and RBX1, promotes degradation of KAT5 thereby attenuating its ability to acetylate and activate ATM. The BCR(KCTD17) E3 ubiquitin ligase complex mediates ubiquitination and degradation of TCHP, a down-regulator of cilium assembly, thereby inducing ciliogenesis. The BCR(KLHL24) E3 ubiquitin ligase complex mediates ubiquitination of KRT14, controls KRT14 levels during keratinocytes differentiation, and is essential for skin integrity. The BCR(KLHL18) E3 ubiquitin ligase complex mediates the ubiquitination of AURKA leading to its activation at the centrosome which is required for initiating mitotic entry. The BCR(KEAP1) E3 ubiquitin ligase complex acts as a key sensor of oxidative and electrophilic stress by mediating ubiquitination and degradation of NFE2L2/NRF2, a transcription factor regulating expression of many cytoprotective genes. As part of the CUL3(KBTBD6/7) E3 ubiquitin ligase complex functions mediates 'Lys-48' ubiquitination and proteasomal degradation of TIAM1. By controlling the ubiquitination of that RAC1 guanine exchange factors (GEF), regulates RAC1 signal transduction and downstream biological processes including the organization of the cytoskeleton, cell migration and cell proliferation. The BCR(KBTBD4) E3 ubiquitin ligase complex targets CoREST corepressor complex components RCOR1, KDM1A/LSD1 and HDAC2 for proteasomal degradation with RCOR1 likely to be the primary target while degradation of KDM1A and HDAC2 is likely due to their association with RCOR1. It also targets RCOR3, MIER2 and MIER3 for proteasomal degradation as well as associated proteins ZNF217 and RREB1 with degradation being dependent on the presence of an ELM2 domain in the target proteins. The BCR(ARMC5) complex mediates premature transcription termination of transcripts that are unfavorably configured for transcriptional elongation by mediating ubiquitination of Pol II subunit POLR2A. Required for 'Lys-63'-linked ubiquitination of large ribosomal subunit protein MRPL12. This Homo sapiens (Human) protein is Cullin-3.